Consider the following 293-residue polypeptide: 4-hydroxy-tetrahydrodipicolinate synthase (293 aa).

Thr44 lines the pyruvate pocket. The active-site Proton donor/acceptor is the Tyr132. The active-site Schiff-base intermediate with substrate is Lys161. Ile203 serves as a coordination point for pyruvate.

Belongs to the DapA family. As to quaternary structure, homotetramer; dimer of dimers.

The protein localises to the cytoplasm. The enzyme catalyses L-aspartate 4-semialdehyde + pyruvate = (2S,4S)-4-hydroxy-2,3,4,5-tetrahydrodipicolinate + H2O + H(+). Its pathway is amino-acid biosynthesis; L-lysine biosynthesis via DAP pathway; (S)-tetrahydrodipicolinate from L-aspartate: step 3/4. Functionally, catalyzes the condensation of (S)-aspartate-beta-semialdehyde [(S)-ASA] and pyruvate to 4-hydroxy-tetrahydrodipicolinate (HTPA). In Persephonella marina (strain DSM 14350 / EX-H1), this protein is 4-hydroxy-tetrahydrodipicolinate synthase.